A 137-amino-acid chain; its full sequence is Holo-[acyl-carrier-protein] synthase (137 aa).

Mg(2+) is bound by residues D8 and E61.

It belongs to the P-Pant transferase superfamily. AcpS family. Requires Mg(2+) as cofactor.

The protein localises to the cytoplasm. The catalysed reaction is apo-[ACP] + CoA = holo-[ACP] + adenosine 3',5'-bisphosphate + H(+). Functionally, transfers the 4'-phosphopantetheine moiety from coenzyme A to a Ser of acyl-carrier-protein. This Afipia carboxidovorans (strain ATCC 49405 / DSM 1227 / KCTC 32145 / OM5) (Oligotropha carboxidovorans) protein is Holo-[acyl-carrier-protein] synthase.